The chain runs to 223 residues: Adenylate kinase 4, mitochondrial (223 aa).

15-20 (GSGKGT) provides a ligand contact to a ribonucleoside 5'-triphosphate. Residues 35–64 (SSGHFLRENIKASTEVGEMAKQYIEKSLLV) form an NMP region. Residues serine 36 and arginine 41 each contribute to the AMP site. Lysine 60 bears the N6-succinyllysine mark. AMP contacts are provided by residues 62–64 (LLV), 89–92 (GFPR), and glutamine 96. The LID stretch occupies residues 125-162 (RRWIHPPSGRVYNLDFNPPHVHGIDDVTGEPLVQQEDD). A ribonucleoside 5'-triphosphate-binding positions include arginine 126 and 135–136 (VY). An AMP-binding site is contributed by arginine 170. Lysine 175 carries the N6-acetyllysine modification. N6-acetyllysine; alternate is present on residues lysine 179 and lysine 186. Lysine 179 and lysine 186 each carry N6-succinyllysine; alternate. Threonine 199 is an a ribonucleoside 5'-triphosphate binding site.

It belongs to the adenylate kinase family. AK3 subfamily. As to quaternary structure, monomer. Interacts with SLC25A5/ANT2. Highly expressed in kidney, moderately expressed in heart and liver and weakly expressed in brain.

It is found in the mitochondrion matrix. It catalyses the reaction a ribonucleoside 5'-phosphate + ATP = a ribonucleoside 5'-diphosphate + ADP. The enzyme catalyses AMP + ATP = 2 ADP. The catalysed reaction is GTP + AMP = GDP + ADP. It carries out the reaction CMP + ATP = CDP + ADP. It catalyses the reaction GTP + CMP = CDP + GDP. The enzyme catalyses dAMP + ATP = dADP + ADP. The catalysed reaction is dCMP + ATP = dCDP + ADP. It carries out the reaction a 2'-deoxyribonucleoside 5'-diphosphate + ATP = a 2'-deoxyribonucleoside 5'-triphosphate + ADP. It catalyses the reaction a ribonucleoside 5'-diphosphate + ATP = a ribonucleoside 5'-triphosphate + ADP. The enzyme catalyses GDP + ATP = GTP + ADP. The catalysed reaction is CDP + GTP = CTP + GDP. It carries out the reaction CDP + ATP = CTP + ADP. It catalyses the reaction UDP + ATP = UTP + ADP. The enzyme catalyses GTP + UDP = UTP + GDP. The catalysed reaction is dADP + GTP = dATP + GDP. It carries out the reaction dCDP + GTP = dCTP + GDP. It catalyses the reaction dCDP + ATP = dCTP + ADP. The enzyme catalyses dGDP + ATP = dGTP + ADP. The catalysed reaction is dTDP + GTP = dTTP + GDP. It carries out the reaction dTDP + ATP = dTTP + ADP. In terms of biological role, broad-specificity mitochondrial nucleoside phosphate kinase involved in cellular nucleotide homeostasis by catalyzing nucleoside-phosphate interconversions. Similar to other adenylate kinases, preferentially catalyzes the phosphorylation of the nucleoside monophosphate AMP with ATP as phosphate donor to produce ADP. Phosphorylates only AMP when using GTP as phosphate donor. In vitro, can also catalyze the phosphorylation of CMP, dAMP and dCMP and use GTP as an alternate phosphate donor. Moreover, exhibits a diphosphate kinase activity, producing ATP, CTP, GTP, UTP, TTP, dATP, dCTP and dGTP from the corresponding diphosphate substrates with either ATP or GTP as phosphate donors. Plays a role in controlling cellular ATP levels by regulating phosphorylation and activation of the energy sensor protein kinase AMPK. Plays a protective role in the cellular response to oxidative stress. In Homo sapiens (Human), this protein is Adenylate kinase 4, mitochondrial.